The chain runs to 267 residues: Ribosomal RNA small subunit methyltransferase A (267 aa).

S-adenosyl-L-methionine is bound by residues His-13, Leu-15, Gly-40, Glu-61, Asp-85, and Asn-105.

The protein belongs to the class I-like SAM-binding methyltransferase superfamily. rRNA adenine N(6)-methyltransferase family. RsmA subfamily.

It localises to the cytoplasm. The enzyme catalyses adenosine(1518)/adenosine(1519) in 16S rRNA + 4 S-adenosyl-L-methionine = N(6)-dimethyladenosine(1518)/N(6)-dimethyladenosine(1519) in 16S rRNA + 4 S-adenosyl-L-homocysteine + 4 H(+). Specifically dimethylates two adjacent adenosines (A1518 and A1519) in the loop of a conserved hairpin near the 3'-end of 16S rRNA in the 30S particle. May play a critical role in biogenesis of 30S subunits. This Bacteroides thetaiotaomicron (strain ATCC 29148 / DSM 2079 / JCM 5827 / CCUG 10774 / NCTC 10582 / VPI-5482 / E50) protein is Ribosomal RNA small subunit methyltransferase A.